Here is a 260-residue protein sequence, read N- to C-terminus: Trialysin (260 aa).

The signal sequence occupies residues 1 to 19 (MSKFWLLLLLVAAFQFAHS). The propeptide at 20–55 (YPAAEYELDETTNDEVRQFIGDGYFEDEGDDGDEER) is removed in mature form, probably by the serine protease triapsin.

The protein belongs to the redulysin-like family. Expressed in salivary glands.

Its subcellular location is the secreted. It is found in the target cell membrane. Pore-forming protein that induces lysis of T.cruzi trypomastigotes, bacteria E.coli and human red blood cells. The parasite lysis is much more important than the hemolysis, probably due to difference in membrane composition. Its action on protozoan parasites and bacteria may indicate a role in the control of microorganism growth in the salivary glands. The polypeptide is Trialysin (Triatoma infestans (Assassin bug)).